Consider the following 42-residue polypeptide: Large ribosomal subunit protein bL36 (42 aa).

It belongs to the bacterial ribosomal protein bL36 family.

The sequence is that of Large ribosomal subunit protein bL36 from Anaplasma marginale (strain St. Maries).